Here is a 578-residue protein sequence, read N- to C-terminus: Probable arginine--tRNA ligase, mitochondrial (578 aa).

Residues 1 to 16 (MACGFRRAIACQLSRV) constitute a mitochondrion transit peptide. Residues 133–135 (SPN), His-144, Tyr-322, Asp-326, and Gln-350 contribute to the L-arginine site. Positions 133-144 (SPNVAKKFHVGH) match the 'HIGH' region motif. At Lys-568 the chain carries N6-acetyllysine.

The protein belongs to the class-I aminoacyl-tRNA synthetase family.

The protein localises to the mitochondrion membrane. It carries out the reaction tRNA(Arg) + L-arginine + ATP = L-arginyl-tRNA(Arg) + AMP + diphosphate. Its function is as follows. Catalyzes the attachment of arginine to tRNA(Arg) in a two-step reaction: arginine is first activated by ATP to form Arg-AMP and then transferred to the acceptor end of tRNA(Arg). This chain is Probable arginine--tRNA ligase, mitochondrial (RARS2), found in Homo sapiens (Human).